The primary structure comprises 98 residues: Large ribosomal subunit protein eL21 (98 aa).

This sequence belongs to the eukaryotic ribosomal protein eL21 family.

This is Large ribosomal subunit protein eL21 from Methanocorpusculum labreanum (strain ATCC 43576 / DSM 4855 / Z).